The chain runs to 466 residues: Putative chitinase (466 aa).

The signal sequence occupies residues 1-17 (MYLTIWLVSILALGTWG). The GH18 domain occupies 20–380 (FNRFCHYNSW…MAVIHGLNAY (361 aa)). The cysteines at positions 24 and 49 are disulfide-linked. Catalysis depends on glutamate 141, which acts as the Proton donor. The stretch at 408-442 (NYRRRNQQEKVAEMEQRIRHLEQELQQSMGNMAYE) forms a coiled coil.

The protein belongs to the glycosyl hydrolase 18 family. As to expression, prismatic layer of shell (at protein level). Expressed primarily in the mantle with highest level in the mantle edge and lower level in the mantle pallium.

The protein localises to the secreted. The enzyme catalyses Random endo-hydrolysis of N-acetyl-beta-D-glucosaminide (1-&gt;4)-beta-linkages in chitin and chitodextrins.. The chain is Putative chitinase from Pinctada maxima (Silver-lipped pearl oyster).